Consider the following 303-residue polypeptide: Pantothenate synthetase (303 aa).

ATP is bound at residue 30–37 (MGYLHAGH). Catalysis depends on His-37, which acts as the Proton donor. Gln-61 provides a ligand contact to (R)-pantoate. Gln-61 contributes to the beta-alanine binding site. 147–150 (GAKD) provides a ligand contact to ATP. Gln-153 is a (R)-pantoate binding site. ATP is bound by residues Val-176 and 184 to 187 (LSSR).

The protein belongs to the pantothenate synthetase family. As to quaternary structure, homodimer.

The protein resides in the cytoplasm. It catalyses the reaction (R)-pantoate + beta-alanine + ATP = (R)-pantothenate + AMP + diphosphate + H(+). The protein operates within cofactor biosynthesis; (R)-pantothenate biosynthesis; (R)-pantothenate from (R)-pantoate and beta-alanine: step 1/1. Functionally, catalyzes the condensation of pantoate with beta-alanine in an ATP-dependent reaction via a pantoyl-adenylate intermediate. This is Pantothenate synthetase from Rhizobium johnstonii (strain DSM 114642 / LMG 32736 / 3841) (Rhizobium leguminosarum bv. viciae).